The following is a 768-amino-acid chain: Probable beta-glucosidase M (768 aa).

Residues 1–19 (MHAIAGLTGFLAGVSLSYA) form the signal peptide. N-linked (GlcNAc...) asparagine glycans are attached at residues N25, N72, and N259. D287 is an active-site residue. 7 N-linked (GlcNAc...) asparagine glycosylation sites follow: N315, N322, N394, N434, N472, N543, and N651.

Belongs to the glycosyl hydrolase 3 family.

The protein localises to the secreted. The enzyme catalyses Hydrolysis of terminal, non-reducing beta-D-glucosyl residues with release of beta-D-glucose.. The protein operates within glycan metabolism; cellulose degradation. Functionally, beta-glucosidases are one of a number of cellulolytic enzymes involved in the degradation of cellulosic biomass. Catalyzes the last step releasing glucose from the inhibitory cellobiose. The polypeptide is Probable beta-glucosidase M (bglM) (Aspergillus flavus (strain ATCC 200026 / FGSC A1120 / IAM 13836 / NRRL 3357 / JCM 12722 / SRRC 167)).